Consider the following 317-residue polypeptide: Acetyl-coenzyme A carboxylase carboxyl transferase subunit alpha (317 aa).

The region spanning 32 to 293 (NLSEEIARLE…KRLLTSELQA (262 aa)) is the CoA carboxyltransferase C-terminal domain.

Belongs to the AccA family. In terms of assembly, acetyl-CoA carboxylase is a heterohexamer composed of biotin carboxyl carrier protein (AccB), biotin carboxylase (AccC) and two subunits each of ACCase subunit alpha (AccA) and ACCase subunit beta (AccD).

Its subcellular location is the cytoplasm. It carries out the reaction N(6)-carboxybiotinyl-L-lysyl-[protein] + acetyl-CoA = N(6)-biotinyl-L-lysyl-[protein] + malonyl-CoA. It functions in the pathway lipid metabolism; malonyl-CoA biosynthesis; malonyl-CoA from acetyl-CoA: step 1/1. In terms of biological role, component of the acetyl coenzyme A carboxylase (ACC) complex. First, biotin carboxylase catalyzes the carboxylation of biotin on its carrier protein (BCCP) and then the CO(2) group is transferred by the carboxyltransferase to acetyl-CoA to form malonyl-CoA. The protein is Acetyl-coenzyme A carboxylase carboxyl transferase subunit alpha of Legionella pneumophila (strain Paris).